Here is a 275-residue protein sequence, read N- to C-terminus: Large ribosomal subunit protein uL2 (275 aa).

The segment covering 36 to 49 (TQSSTAGRNNNGRI) has biased composition (polar residues). Disordered stretches follow at residues 36–59 (TQSSTAGRNNNGRITTRHKGGGHK) and 224–275 (AMNP…RHKR). A compositionally biased stretch (basic residues) spans 50 to 59 (TTRHKGGGHK).

The protein belongs to the universal ribosomal protein uL2 family. In terms of assembly, part of the 50S ribosomal subunit. Forms a bridge to the 30S subunit in the 70S ribosome.

In terms of biological role, one of the primary rRNA binding proteins. Required for association of the 30S and 50S subunits to form the 70S ribosome, for tRNA binding and peptide bond formation. It has been suggested to have peptidyltransferase activity; this is somewhat controversial. Makes several contacts with the 16S rRNA in the 70S ribosome. This is Large ribosomal subunit protein uL2 from Burkholderia vietnamiensis (strain G4 / LMG 22486) (Burkholderia cepacia (strain R1808)).